A 6359-amino-acid polypeptide reads, in one-letter code: Bacitracin synthase 3 (6359 aa).

Positions 461-1034 are domain 1 (isoleucine-activating); the sequence is LHELFEEQAM…IKGLGEYIRS (574 aa). Positions 941–953 are enriched in basic and acidic residues; the sequence is VDRKALPEPDRTA. The disordered stretch occupies residues 941–962; the sequence is VDRKALPEPDRTAGAENEYEAP. Carrier domains lie at 961-1036, 1993-2067, 3497-3572, 4539-4613, and 6047-6122; these read APRN…RSTK, APRN…KKQS, APRN…ESMK, PPRN…KAES, and PPRH…KHAQ. Residues S996, S2028, and S3532 each carry the O-(pantetheine 4'-phosphoryl)serine modification. Residues 1517–2064 form a domain 2 (D-phenylalanine-activating) region; that stretch reads FEDQTLTYRQ…RIKDLAKYVK (548 aa). The segment at 2999–3570 is domain 3 (histidine-activating); it reads NKTIHQLFEE…IKDIGDFIES (572 aa). The domain 4 (D-aspartic acid-activating) stretch occupies residues 4047 to 4612; it reads EQTAVVYADE…KSLSRYVKAE (566 aa). Residues 4521–4544 form a disordered region; the sequence is IDTAALPEPQPGKETEYEPPRNET. Basic and acidic residues predominate over residues 4531-4544; it reads PGKETEYEPPRNET. 2 positions are modified to O-(pantetheine 4'-phosphoryl)serine: S4574 and S6082. Residues 5549-6129 form a domain 5 (asparagine-activating) region; it reads IHRLFEEQAE…HAQDLLKDYT (581 aa).

Belongs to the ATP-dependent AMP-binding enzyme family. As to quaternary structure, large multienzyme complex of BA1, BA2 and BA3. Pantetheine 4'-phosphate is required as a cofactor.

It carries out the reaction L-aspartate = D-aspartate. It catalyses the reaction L-phenylalanine + ATP + H2O = D-phenylalanine + AMP + diphosphate + H(+). Its pathway is antibiotic biosynthesis; bacitracin biosynthesis. Induces peptide synthesis, activates and incorporates five amino acids, forms a thiazoline ring between the first two amino acids and incorporates a D-glutamine in the fourth position. The chain is Bacitracin synthase 3 (bacC) from Bacillus licheniformis.